Here is a 193-residue protein sequence, read N- to C-terminus: UPF0397 protein PA0141 (193 aa).

5 consecutive transmembrane segments (helical) span residues 11 to 31 (VTIAINTAIYVILSCFASIPI), 43 to 63 (FLVFVAVLFGSKVGLSVGLLG), 69 to 89 (FFLFGNVYFNWIVCSGLLGFL), 109 to 129 (ILFFWLYQVFVNVLVFGLIAP), and 147 to 167 (GFLVVLSNILSYSLFGIFLMS).

It belongs to the UPF0397 family.

Its subcellular location is the cell membrane. The protein is UPF0397 protein PA0141 of Phytoplasma australiense.